We begin with the raw amino-acid sequence, 193 residues long: Peptidyl-tRNA hydrolase (193 aa).

His17 is a tRNA binding site. His22 (proton acceptor) is an active-site residue. 3 residues coordinate tRNA: Phe68, Asn70, and Asn116.

Belongs to the PTH family. As to quaternary structure, monomer.

The protein localises to the cytoplasm. The enzyme catalyses an N-acyl-L-alpha-aminoacyl-tRNA + H2O = an N-acyl-L-amino acid + a tRNA + H(+). Hydrolyzes ribosome-free peptidyl-tRNAs (with 1 or more amino acids incorporated), which drop off the ribosome during protein synthesis, or as a result of ribosome stalling. In terms of biological role, catalyzes the release of premature peptidyl moieties from peptidyl-tRNA molecules trapped in stalled 50S ribosomal subunits, and thus maintains levels of free tRNAs and 50S ribosomes. The protein is Peptidyl-tRNA hydrolase of Xanthomonas campestris pv. campestris (strain 8004).